The following is a 160-amino-acid chain: Nucleotide-binding protein CBU_0114 (160 aa).

It belongs to the YajQ family.

In terms of biological role, nucleotide-binding protein. This is Nucleotide-binding protein CBU_0114 from Coxiella burnetii (strain RSA 493 / Nine Mile phase I).